A 381-amino-acid chain; its full sequence is Putative 8-amino-7-oxononanoate synthase (381 aa).

Residue R22 coordinates substrate. G109–F110 contacts pyridoxal 5'-phosphate. Residue H134 coordinates substrate. Residues S182, D207–H210, and T233–K236 contribute to the pyridoxal 5'-phosphate site. An N6-(pyridoxal phosphate)lysine modification is found at K236. T345 lines the substrate pocket.

The protein belongs to the class-II pyridoxal-phosphate-dependent aminotransferase family. BioF subfamily. Homodimer. Pyridoxal 5'-phosphate is required as a cofactor.

The enzyme catalyses 6-carboxyhexanoyl-[ACP] + L-alanine + H(+) = (8S)-8-amino-7-oxononanoate + holo-[ACP] + CO2. It functions in the pathway cofactor biosynthesis; biotin biosynthesis. Catalyzes the decarboxylative condensation of pimeloyl-[acyl-carrier protein] and L-alanine to produce 8-amino-7-oxononanoate (AON), [acyl-carrier protein], and carbon dioxide. The chain is Putative 8-amino-7-oxononanoate synthase (bioF) from Acidiphilium cryptum (strain JF-5).